Reading from the N-terminus, the 105-residue chain is Large ribosomal subunit protein uL24 (105 aa).

This sequence belongs to the universal ribosomal protein uL24 family. As to quaternary structure, part of the 50S ribosomal subunit.

Its function is as follows. One of two assembly initiator proteins, it binds directly to the 5'-end of the 23S rRNA, where it nucleates assembly of the 50S subunit. In terms of biological role, one of the proteins that surrounds the polypeptide exit tunnel on the outside of the subunit. This chain is Large ribosomal subunit protein uL24, found in Psychrobacter sp. (strain PRwf-1).